The primary structure comprises 66 residues: Beta-mammal toxin Cv2 (66 aa).

An LCN-type CS-alpha/beta domain is found at 1–66; that stretch reads KEGYIVNHST…VWPLPKKTCN (66 aa). 4 disulfides stabilise this stretch: Cys12–Cys65, Cys16–Cys41, Cys25–Cys46, and Cys29–Cys48.

Expressed by the venom gland.

It is found in the secreted. Is susceptible to be slightly neutralized by human antibodies scFvs 10FG2. Functionally, beta toxins bind voltage-independently at site-4 of sodium channels (Nav) and reduces peak current and shifts the voltage of activation toward more negative potentials thereby affecting sodium channel activation and promoting spontaneous and repetitive firing. This toxin is slightly toxic to mice. The polypeptide is Beta-mammal toxin Cv2 (Centruroides villegasi (Scorpion)).